A 355-amino-acid polypeptide reads, in one-letter code: Lipopolysaccharide heptosyltransferase 1 (355 aa).

The ADP-L-glycero-beta-D-manno-heptose site is built by threonine 186, threonine 187, lysine 191, glutamate 221, aspartate 260, threonine 261, glycine 262, and histidine 265.

It belongs to the glycosyltransferase 9 family.

The protein resides in the cell inner membrane. The enzyme catalyses an alpha-Kdo-(2-&gt;4)-alpha-Kdo-(2-&gt;6)-lipid A + ADP-L-glycero-beta-D-manno-heptose = an L-alpha-D-Hep-(1-&gt;5)-[alpha-Kdo-(2-&gt;4)]-alpha-Kdo-(2-&gt;6)-lipid A + ADP + H(+). Its pathway is bacterial outer membrane biogenesis; LPS core biosynthesis. Its function is as follows. Glycosyltransferase involved in the biosynthesis of the core oligosaccharide region of lipopolysaccharide (LPS). Catalyzes the addition of the first heptose unit to one 3-deoxy-D-manno-octulosonic acid (Kdo) residue of the Kdo2-lipid A module. This chain is Lipopolysaccharide heptosyltransferase 1, found in Pseudomonas aeruginosa (strain ATCC 15692 / DSM 22644 / CIP 104116 / JCM 14847 / LMG 12228 / 1C / PRS 101 / PAO1).